Here is a 318-residue protein sequence, read N- to C-terminus: Carbamate kinase (318 aa).

This sequence belongs to the carbamate kinase family.

It is found in the cytoplasm. It carries out the reaction hydrogencarbonate + NH4(+) + ATP = carbamoyl phosphate + ADP + H2O + H(+). It functions in the pathway metabolic intermediate metabolism; carbamoyl phosphate degradation; CO(2) and NH(3) from carbamoyl phosphate: step 1/1. The protein is Carbamate kinase (arcC) of Lentilactobacillus hilgardii (Lactobacillus hilgardii).